The sequence spans 340 residues: Very-long-chain 3-oxoacyl-CoA reductase (340 aa).

Residues 23–43 (LQYTFAALGALYVLRGALSFV) traverse the membrane as a helical segment. Positions 68, 109, 123, 131, 150, 185, 217, 221, 250, and 252 each coordinate NADP(+). The Proton donor role is filled by Tyr-217. Residue Lys-221 is the Lowers pKa of active site Tyr of the active site.

This sequence belongs to the short-chain dehydrogenases/reductases (SDR) family.

Its subcellular location is the endoplasmic reticulum membrane. The enzyme catalyses a very-long-chain (3R)-3-hydroxyacyl-CoA + NADP(+) = a very-long-chain 3-oxoacyl-CoA + NADPH + H(+). It functions in the pathway lipid metabolism; fatty acid biosynthesis. Its function is as follows. Component of the microsomal membrane bound fatty acid elongation system, which produces the 26-carbon very long-chain fatty acids (VLCFA) from palmitate. Catalyzes the reduction of the 3-ketoacyl-CoA intermediate that is formed in each cycle of fatty acid elongation. VLCFAs serve as precursors for ceramide and sphingolipids. The polypeptide is Very-long-chain 3-oxoacyl-CoA reductase (Podospora anserina (strain S / ATCC MYA-4624 / DSM 980 / FGSC 10383) (Pleurage anserina)).